Reading from the N-terminus, the 213-residue chain is Receptor-binding cancer antigen expressed on SiSo cells (213 aa).

Residues 1–6 (MAITQF) lie on the Extracellular side of the membrane. The helical; Signal-anchor for type III membrane protein transmembrane segment at 7–27 (RLFKFCTCLATVFSFLKRLIC) threads the bilayer. Topologically, residues 28 to 213 (RSGRGRKLSG…EQNKIGVKLS (186 aa)) are cytoplasmic. Phosphoserine is present on Ser-36. Residue Thr-41 is modified to Phosphothreonine. The residue at position 94 (Tyr-94) is a Phosphotyrosine. Residues 163 to 211 (EDAAWQAEEVLRQQKLADREKRAAEQQRKKMEKEAQRLMKKEQNKIGVK) are a coiled coil. Residues 178–206 (LADREKRAAEQQRKKMEKEAQRLMKKEQN) show a composition bias toward basic and acidic residues. The segment at 178–213 (LADREKRAAEQQRKKMEKEAQRLMKKEQNKIGVKLS) is disordered.

Homodimer. As to expression, widely expressed. Expressed in ovary, testis, prostate, thymus, muscle and heart, but not in small intestine, colon, lymph nodes, or peripherical blood lymphocytes. The protein is not detected in any of the above organs.

It is found in the golgi apparatus membrane. In terms of biological role, may participate in suppression of cell proliferation and induces apoptotic cell death through activation of interleukin-1-beta converting enzyme (ICE)-like proteases. This chain is Receptor-binding cancer antigen expressed on SiSo cells (EBAG9), found in Homo sapiens (Human).